Consider the following 196-residue polypeptide: Rho-related protein racL (196 aa).

10–17 contacts GTP; it reads GDGAVGKT. An Effector region motif is present at residues 32-40; it reads YQPTVFDNF. GTP-binding positions include 57 to 61 and 116 to 119; these read DTAGQ and TQND. The residue at position 193 (cysteine 193) is a Cysteine methyl ester. A lipid anchor (S-geranylgeranyl cysteine) is attached at cysteine 193. Residues 194–196 constitute a propeptide, removed in mature form; it reads IIL.

The protein belongs to the small GTPase superfamily. Rho family.

Its subcellular location is the cell membrane. In Dictyostelium discoideum (Social amoeba), this protein is Rho-related protein racL (racL).